A 485-amino-acid chain; its full sequence is Sphingosine kinase 1 (485 aa).

A DAGKc domain is found at 116–258; sequence GRPKKLLVFV…LDVATISQGT (143 aa). ATP-binding positions include 126 to 128 and threonine 158; that span reads NPF. 183–186 provides a ligand contact to substrate; the sequence is SGDG. Aspartate 185 acts as the Proton donor/acceptor in catalysis. ATP is bound by residues glutamate 190 and 215–217; that span reads GSG. Substrate is bound at residue aspartate 276. ATP contacts are provided by residues arginine 283, arginine 289, and 446-448; that span reads DGE.

The cofactor is Mg(2+). In terms of tissue distribution, highly expressed in stems and flowers and at lower levels in roots, leaves and siliques.

The protein localises to the vacuole membrane. It carries out the reaction a sphingoid base + ATP = a sphingoid 1-phosphate + ADP + H(+). With respect to regulation, activated by phosphatidic acid (PA). Binding with PA stimulates the activity by promoting the binding of substrate to the catalytic site. Its function is as follows. Involved in the production of sphingolipid metabolites. Phosphorylates sphingosine and various sphingoid long-chain base (LCB) products, such as phytosphingosine (PHS, 4-hydroxysphinganine), 4-hydroxy-8-sphingenine, 4,8-sphingadienine, D-erythro-dihydrosphingosine and D,L-threo-dihydrosphingosine. Is required for abscisic acid (ABA) signaling that mediates stomatal closure, inhibition of seed germination and root elongation. May function upstream of PLDALPHA1 and phosphatidic acid (PA) in an amplification response to ABA that mediates stomatal closure. This Arabidopsis thaliana (Mouse-ear cress) protein is Sphingosine kinase 1 (SPHK1).